The sequence spans 385 residues: MDDELDYGSDHSIHGDVREDLSDSELQLPKDRLDAIIDRKEKIATEKAFGINDSSDKHLNVSIAETAALRKEIGASDQNSHLDSIYAHGVEAMDEFEIQKMFANFRPEKVWKKDNVAMVQFQYRRDVAAMMLNMSKMMRRVRGRKKADEEGEVLSDDDDVEEGQIMQEKDDDVELIEDLKPNEKGIVASEKNNEFITVDINAREVPNGKWRVLTKHVPANMFVIIRYATTDEYQTMVTSDRSQVKKTGVKRGNDSFWTHESSNRGGLNVFDKEGKELEWDYEHDTRFYNEDKNEEKVEKVKLPQGIKIKGRGAVKCGFLFGEGSSSLASDDTTPVKKRRTDEKDYEKDDIVSRQGSSAHAIRPGRVERPIRERIQFPGREDPDEY.

Disordered regions lie at residues 1–20 (MDDE…VRED) and 326–385 (SLAS…PDEY). Basic and acidic residues-rich tracts occupy residues 8–20 (GSDH…VRED), 339–351 (RTDE…DDIV), and 364–385 (GRVE…PDEY).

In Caenorhabditis elegans, this protein is Protein kup-1 (kup-1).